The chain runs to 293 residues: 4-hydroxy-tetrahydrodipicolinate synthase (293 aa).

Thr45 contributes to the pyruvate binding site. Tyr133 serves as the catalytic Proton donor/acceptor. The active-site Schiff-base intermediate with substrate is Lys161. Ile204 provides a ligand contact to pyruvate.

This sequence belongs to the DapA family. As to quaternary structure, homotetramer; dimer of dimers.

Its subcellular location is the cytoplasm. The catalysed reaction is L-aspartate 4-semialdehyde + pyruvate = (2S,4S)-4-hydroxy-2,3,4,5-tetrahydrodipicolinate + H2O + H(+). It functions in the pathway amino-acid biosynthesis; L-lysine biosynthesis via DAP pathway; (S)-tetrahydrodipicolinate from L-aspartate: step 3/4. Catalyzes the condensation of (S)-aspartate-beta-semialdehyde [(S)-ASA] and pyruvate to 4-hydroxy-tetrahydrodipicolinate (HTPA). This chain is 4-hydroxy-tetrahydrodipicolinate synthase, found in Yersinia pseudotuberculosis serotype I (strain IP32953).